A 300-amino-acid chain; its full sequence is uncharacterized protein (300 aa).

An N-terminal signal peptide occupies residues 1–20 (MRLLISCILILSILVNFISG). The Extracellular portion of the chain corresponds to 21–279 (HAVLVAPTPF…PCSIYGDGNG (259 aa)). Asn56, Asn217, and Asn278 each carry an N-linked (GlcNAc...) asparagine glycan. Residues 280 to 300 (SNLIIIPTLLIISILSLILMF) traverse the membrane as a helical segment.

The protein localises to the membrane. This is an uncharacterized protein from Dictyostelium discoideum (Social amoeba).